A 100-amino-acid chain; its full sequence is Small ribosomal subunit protein bS6 (100 aa).

This sequence belongs to the bacterial ribosomal protein bS6 family.

Its function is as follows. Binds together with bS18 to 16S ribosomal RNA. The polypeptide is Small ribosomal subunit protein bS6 (Tropheryma whipplei (strain Twist) (Whipple's bacillus)).